The sequence spans 544 residues: MNNEIVKKWLSSDNVPQTDKDIISKMKNEELELAFSNAPLSFGTAGIRAKMAPGTQFLNKITYYQMATGYGKFLKNKFSNQNISVIVAHDNRNNGIDFSIDVTNILTSLELEFICLKIINLLLRQLFSYAIRKLNAQGAVIVTASHNPKEDNGFKIYNETGAQVLPDDGLKVVELMPNVFEMIDLKVANDDSLITYLNEDIFRQYYEDCKQALIKTNINESKEFSIVFSGQHGTACKRLPEFLKLLGYKNIILVEEQCIFDGNFSNTPTPNPENRAAWDLSIEYADKNNANVIIQVDPDADRFALGVRYKNSWRFLSGNQMGIIYTDYILKNKTFTKKPYIVSSYVSTNLIDRIIKEYHGEVYRVGTGFKWVGDKINKIKDSEEFVVGFEEAVGALNSTINRDKDAYQAAALALEIYNECLKNNINIIDHLEKNIYGKYGIIHNDTISFTFVENNWKELVKKSLDKILKYSEKTIGNRTITSIKYNEVGGCYDWILDGDSWLRFRMSGTEPKFKVYYNLYGENLNALSQEAKTINDQIKTLLNL.

Catalysis depends on S145, which acts as the Phosphoserine intermediate. The Mg(2+) site is built by S145, D297, D299, and D301.

This sequence belongs to the phosphohexose mutase family. Requires Mg(2+) as cofactor.

The catalysed reaction is alpha-D-mannose 1-phosphate = D-mannose 6-phosphate. This chain is Phosphomannomutase (manB), found in Mycoplasmoides pirum (Mycoplasma pirum).